Reading from the N-terminus, the 333-residue chain is Eukaryotic translation initiation factor 3 subunit I (333 aa).

4 WD repeats span residues 8 to 47 (GHER…RLGT), 50 to 91 (GHTG…ALLK), 144 to 183 (CNDS…VLVN), and 186 to 225 (EHSR…HQKT). Thr219 carries the phosphothreonine modification. Lys264 bears the N6-acetyllysine mark. Residue Lys282 forms a Glycyl lysine isopeptide (Lys-Gly) (interchain with G-Cter in ubiquitin) linkage. Residues 283–324 (GHFGPINSVAFHPDGKSYSSGGEDGYVRIHYFDPQYFEFEFE) form a WD 5 repeat. Tyr308 carries the post-translational modification Phosphotyrosine.

It belongs to the eIF-3 subunit I family. In terms of assembly, component of the eukaryotic translation initiation factor 3 (eIF-3) complex, which is composed of 13 subunits: EIF3A, EIF3B, EIF3C, EIF3D, EIF3E, EIF3F, EIF3G, EIF3H, EIF3I, EIF3J, EIF3K, EIF3L and EIF3M. The eIF-3 complex appears to include 3 stable modules: module A is composed of EIF3A, EIF3B, EIF3G and EIF3I; module B is composed of EIF3F, EIF3H, and EIF3M; and module C is composed of EIF3C, EIF3D, EIF3E, EIF3K and EIF3L. EIF3C of module C binds EIF3B of module A and EIF3H of module B, thereby linking the three modules. EIF3J is a labile subunit that binds to the eIF-3 complex via EIF3B. The eIF-3 complex interacts with RPS6KB1 under conditions of nutrient depletion. Mitogenic stimulation leads to binding and activation of a complex composed of MTOR and RPTOR, leading to phosphorylation and release of RPS6KB1 and binding of EIF4B to eIF-3. Post-translationally, phosphorylated by TGF-beta type II receptor.

The protein localises to the cytoplasm. In terms of biological role, component of the eukaryotic translation initiation factor 3 (eIF-3) complex, which is required for several steps in the initiation of protein synthesis. The eIF-3 complex associates with the 40S ribosome and facilitates the recruitment of eIF-1, eIF-1A, eIF-2:GTP:methionyl-tRNAi and eIF-5 to form the 43S pre-initiation complex (43S PIC). The eIF-3 complex stimulates mRNA recruitment to the 43S PIC and scanning of the mRNA for AUG recognition. The eIF-3 complex is also required for disassembly and recycling of post-termination ribosomal complexes and subsequently prevents premature joining of the 40S and 60S ribosomal subunits prior to initiation. The eIF-3 complex specifically targets and initiates translation of a subset of mRNAs involved in cell proliferation, including cell cycling, differentiation and apoptosis, and uses different modes of RNA stem-loop binding to exert either translational activation or repression. The chain is Eukaryotic translation initiation factor 3 subunit I from Oryctolagus cuniculus (Rabbit).